Here is a 256-residue protein sequence, read N- to C-terminus: Probable septum site-determining protein MinC (256 aa).

Positions 105–143 are disordered; the sequence is RRGATAKPEPADEAEPPVAAAAAEAVPEPAPELAPSAPT. Positions 120 to 142 are enriched in low complexity; that stretch reads PPVAAAAAEAVPEPAPELAPSAP.

Belongs to the MinC family. Interacts with MinD and FtsZ.

Cell division inhibitor that blocks the formation of polar Z ring septums. Rapidly oscillates between the poles of the cell to destabilize FtsZ filaments that have formed before they mature into polar Z rings. Prevents FtsZ polymerization. The protein is Probable septum site-determining protein MinC of Burkholderia vietnamiensis (strain G4 / LMG 22486) (Burkholderia cepacia (strain R1808)).